Reading from the N-terminus, the 300-residue chain is Mitochondrial tricarboxylate transporter 1 (300 aa).

Solcar repeat units lie at residues 8–98 (VSPS…FRSM), 107–197 (LSNS…LRDW), and 209–294 (INWL…VVWL). Transmembrane regions (helical) follow at residues 11 to 31 (SVSVVAGATAGAVEGVATFPI), 67 to 87 (PKGLFRGCTAMVVGNAGKAGV), 114 to 134 (LAGMGAGTLEAIFAVTPSETI), 172 to 191 (GVVPVVMRQGSASAIRLGTY), 208 to 228 (LINWLATFSIGAASGVVAVYG), and 277 to 297 (LIVSGGVIFSVYEQVVWLLAG).

Belongs to the mitochondrial carrier (TC 2.A.29) family.

The protein resides in the mitochondrion membrane. Functionally, mitochondrial tricarboxylate transporter; part of the gene cluster that mediates the biosynthesis of itaconic acid and 2-hydroxyparaconate. Cis-aconitate is secreted by the mitochondrial tricarboxylate transporter MTT1. In the cytosol cis-aconitate is converted into trans-aconitate via isomerization by the aconitate-delta-isomerase ADI1. Decarboxylation of trans-aconitate by the trans-aconitate decarboxylase TAD1 then leads then to the production of itaconic acid. The cytochrome P450 monooxygenase CYP3 further converts itaconate to 2-hydroxyparaconate via oxidation of the double bond, leading to a transient epoxide, which can subsequently be lactonized to produce 2-hydroxyparaconate. Secretion of itaconate and possibly 2-hydroxyparaconate into the medium is mediated by the major facilitator ITP1. The glyoxalase domain-containing protein RDO1 is not involved in the biosynthesis of itaconate and 2-hydroxyparaconate, however, it might play a role in the further conversion of 2-hydroxyparaconate to itatartarate. The polypeptide is Mitochondrial tricarboxylate transporter 1 (Mycosarcoma maydis (Corn smut fungus)).